A 108-amino-acid chain; its full sequence is NADH dehydrogenase [ubiquinone] 1 alpha subcomplex subunit 8-A (108 aa).

CHCH domains are found at residues 28–69 and 70–108; these read GIRC…LKDL and HQRCPKEMDAYVGCMYYYTNEFELCRKEQEAFEKVCPLK. 3 short sequence motifs (cx9C motif) span residues 31-41, 51-61, and 73-83; these read CMPENMAFLKC, CLEKGRDVTRC, and CPKEMDAYVGC. 4 disulfide bridges follow: cysteine 31-cysteine 61, cysteine 41-cysteine 51, cysteine 73-cysteine 105, and cysteine 83-cysteine 94. A Cx10C motif motif is present at residues 94 to 105; that stretch reads CRKEQEAFEKVC.

The protein belongs to the complex I NDUFA8 subunit family. As to quaternary structure, complex I is composed of at least 49 different subunits.

Its subcellular location is the mitochondrion. It is found in the mitochondrion intermembrane space. In terms of biological role, accessory subunit of the mitochondrial membrane respiratory chain NADH dehydrogenase (Complex I), that is believed not to be involved in catalysis. Complex I functions in the transfer of electrons from NADH to the respiratory chain. The immediate electron acceptor for the enzyme is believed to be ubiquinone. In Arabidopsis thaliana (Mouse-ear cress), this protein is NADH dehydrogenase [ubiquinone] 1 alpha subcomplex subunit 8-A.